A 228-amino-acid polypeptide reads, in one-letter code: Expansin-B13 (228 aa).

An N-terminal signal peptide occupies residues 1–22 (MASSSLLLASVVVAAMVSAVSC). Asn-32 is a glycosylation site (N-linked (GlcNAc...) asparagine). In terms of domain architecture, Expansin-like EG45 spans 61 to 172 (SGACGYKDVD…KEKGSEEWKA (112 aa)). Cystine bridges form between Cys-64-Cys-92 and Cys-100-Cys-106. The 82-residue stretch at 142-223 (GKDEELLKYV…GWKADSVYKS (82 aa)) folds into the Expansin-like CBD domain.

The protein belongs to the expansin family. Expansin B subfamily.

The protein resides in the secreted. It is found in the cell wall. Its subcellular location is the membrane. May cause loosening and extension of plant cell walls by disrupting non-covalent bonding between cellulose microfibrils and matrix glucans. No enzymatic activity has been found. May be required for rapid internodal elongation in deepwater rice during submergence. The sequence is that of Expansin-B13 (EXPB13) from Oryza sativa subsp. japonica (Rice).